Consider the following 99-residue polypeptide: Protein translation factor SUI1 homolog (99 aa).

The protein belongs to the SUI1 family.

The polypeptide is Protein translation factor SUI1 homolog (Pyrococcus horikoshii (strain ATCC 700860 / DSM 12428 / JCM 9974 / NBRC 100139 / OT-3)).